The primary structure comprises 217 residues: tRNA (guanine-N(7)-)-methyltransferase (217 aa).

Positions 44, 69, 96, and 118 each coordinate S-adenosyl-L-methionine. Asp118 is a catalytic residue. Substrate-binding positions include Lys122, Asp154, and 191 to 194 (TEYE).

It belongs to the class I-like SAM-binding methyltransferase superfamily. TrmB family.

It catalyses the reaction guanosine(46) in tRNA + S-adenosyl-L-methionine = N(7)-methylguanosine(46) in tRNA + S-adenosyl-L-homocysteine. It functions in the pathway tRNA modification; N(7)-methylguanine-tRNA biosynthesis. In terms of biological role, catalyzes the formation of N(7)-methylguanine at position 46 (m7G46) in tRNA. In Bacillus cereus (strain B4264), this protein is tRNA (guanine-N(7)-)-methyltransferase.